Reading from the N-terminus, the 439-residue chain is Proline--tRNA ligase (439 aa).

Belongs to the class-II aminoacyl-tRNA synthetase family. ProS type 2 subfamily. Homodimer.

The protein resides in the cytoplasm. It catalyses the reaction tRNA(Pro) + L-proline + ATP = L-prolyl-tRNA(Pro) + AMP + diphosphate. Catalyzes the attachment of proline to tRNA(Pro) in a two-step reaction: proline is first activated by ATP to form Pro-AMP and then transferred to the acceptor end of tRNA(Pro). This chain is Proline--tRNA ligase, found in Hyphomonas neptunium (strain ATCC 15444).